The chain runs to 631 residues: Hepatocyte nuclear factor 1-alpha (631 aa).

The interval 1-31 is dimerization; it reads MVSKLSQLQTELLAALLESGLSKEALIQALG. Residues 1–32 form the HNF-p1 domain; it reads MVSKLSQLQTELLAALLESGLSKEALIQALGE. The segment at 40–81 is disordered; the sequence is GEGPLDKGESCGGGRGELAELPNGLGETRGSEDETDDDGEDF. A Phosphoserine modification is found at Ser70. Residue Thr74 is modified to Phosphothreonine. The region spanning 87-182 is the POU-specific atypical domain; sequence KELENLSPEE…VAQQFTHAGQ (96 aa). Ser93 bears the Phosphoserine mark. Residue Lys117 forms a Glycyl lysine isopeptide (Lys-Gly) (interchain with G-Cter in ubiquitin) linkage. Interaction with DNA stretches follow at residues 130–132, 143–149, 155–158, and 203–206; these read QRE, HLSQHLN, KTQK, and RFKW. Positions 183-205 are disordered; the sequence is GGLIEEPTGDELPTKKGRRNRFK. Positions 197–205 match the Nuclear localization signal motif; it reads KKGRRNRFK. The homeobox; HNF1-type DNA-binding region spans 199–279; sequence GRRNRFKWGP…NRRKEEAFRH (81 aa). Ser247 is subject to Phosphoserine. 2 interaction with DNA regions span residues 263 to 265 and 270 to 273; these read RVY and NRRK. Disordered regions lie at residues 283 to 358 and 545 to 567; these read MDTY…GLEP and SDTE…TLHV. Pro residues predominate over residues 288-298; sequence GPPPGPGPGPA. A Phosphoserine modification is found at Ser313. Over residues 325 to 353 the composition is skewed to polar residues; that stretch reads PATSETAEVPSSSGGPLVTVSTPLHQVSP.

Belongs to the HNF1 homeobox family. In terms of assembly, binds DNA as a dimer. Heterotetramer with PCBD1; formed by a dimer of dimers. Interacts with PCBD1. Interacts with BHLHE41. Interacts with NR5A2. Interacts with SPOP; this interaction promotes ubiquitination and degradation of HNF1A. Ubiquitinated in s SPOP-dependent manner; leading to prteasomal degradation. In terms of tissue distribution, liver.

The protein localises to the nucleus. Functionally, transcriptional activator that regulates the tissue specific expression of multiple genes, especially in pancreatic islet cells and in liver. Binds to the inverted palindrome 5'-GTTAATNATTAAC-3'. Activates the transcription of CYP1A2, CYP2E1 and CYP3A11. (Microbial infection) Plays a crucial role for hepatitis B virus gene transcription and DNA replication. Mechanistically, synergistically cooperates with NR5A2 to up-regulate the activity of one of the critical cis-elements in the hepatitis B virus genome enhancer II (ENII). This is Hepatocyte nuclear factor 1-alpha (HNF1A) from Homo sapiens (Human).